The chain runs to 114 residues: Secretoglobin family 2B member 2 (114 aa).

The signal sequence occupies residues 1–23 (MKGTLLLLALLVTGELGFQRTEA).

The protein belongs to the secretoglobin family. Expressed in lacrimal gland.

It localises to the secreted. The polypeptide is Secretoglobin family 2B member 2 (Scgb2b2) (Mus musculus (Mouse)).